We begin with the raw amino-acid sequence, 833 residues long: Leucine--tRNA ligase (833 aa).

Positions 41 to 52 match the 'HIGH' region motif; that stretch reads PYPSGAGLHVGH. A 'KMSKS' region motif is present at residues 610 to 614; that stretch reads KMSKS. Residue Lys613 participates in ATP binding.

It belongs to the class-I aminoacyl-tRNA synthetase family.

The protein resides in the cytoplasm. It catalyses the reaction tRNA(Leu) + L-leucine + ATP = L-leucyl-tRNA(Leu) + AMP + diphosphate. In Streptococcus pyogenes serotype M3 (strain ATCC BAA-595 / MGAS315), this protein is Leucine--tRNA ligase.